A 219-amino-acid polypeptide reads, in one-letter code: Small ribosomal subunit protein uS3c (219 aa).

The 78-residue stretch at 43–120 folds into the KH type-2 domain; it reads IQNYIQKNMQ…KINITITKIT (78 aa).

The protein belongs to the universal ribosomal protein uS3 family. In terms of assembly, part of the 30S ribosomal subunit.

It localises to the plastid. The protein localises to the chloroplast. This Oenothera elata subsp. hookeri (Hooker's evening primrose) protein is Small ribosomal subunit protein uS3c (rps3).